Reading from the N-terminus, the 146-residue chain is Putative pre-16S rRNA nuclease (146 aa).

It belongs to the YqgF nuclease family.

The protein localises to the cytoplasm. Its function is as follows. Could be a nuclease involved in processing of the 5'-end of pre-16S rRNA. This Burkholderia mallei (strain SAVP1) protein is Putative pre-16S rRNA nuclease.